Here is a 1717-residue protein sequence, read N- to C-terminus: DNA-directed RNA polymerase I subunit RPA1 (1717 aa).

Residues Cys64, Cys67, Cys74, His77, Cys104, and Cys107 each coordinate Zn(2+). A clamp region spans residues 110-201 (LTCPRAAIYL…VAQFWKTHMA (92 aa)). Zn(2+)-binding residues include Cys205 and Cys208. The segment at 327–433 (FTNGQTVNLQ…IRQILEKKEG (107 aa)) is clamp. The interval 410-423 (DSEMDKLMLEKYPG) is rudder. Residues Lys431, Arg436, and Arg443 each contribute to the DNA site. Positions 475–549 (YPQPVTPWNV…QGTKVVCRHV (75 aa)) are involved in RRN3 binding to Pol I complex. An RNA-binding site is contributed by Arg559. Mg(2+) is bound by residues Asp595, Asp597, and Asp599. Asp599 is a binding site for RNA. The funnel stretch occupies residues 812–890 (KPNADVVRQR…NEINKACMPL (79 aa)). A bridging helix region spans residues 967 to 1008 (RPPEFFFHCMAGREGLVDTAVKTSRSGYLQRCIIKHLEGLVI). Positions 1067 to 1162 (ADPQKVLGHI…SLSVWRPDIY (96 aa)) are mediates the interaction with TOP2A. Positions 1214–1255 (PGEAVGLLAAQSIGEPSTQMTLNTFHFAGRGEMNVTLGIPRL) are trigger loop. Position 1256 (Arg1256) interacts with DNA. The disordered stretch occupies residues 1372 to 1493 (RNVNSRRATQ…RRHSRPQGAE (122 aa)). A compositionally biased stretch (basic and acidic residues) spans 1380 to 1397 (TQKDLNDTEDSGRSQREE). At Ser1393 the chain carries Phosphoserine. Acidic residues-rich tracts occupy residues 1398–1419 (ERDE…DADA) and 1429–1450 (EEEV…EVQE). Positions 1452-1464 (GNIKGDGVHQGHE) are enriched in basic and acidic residues. A compositionally biased stretch (acidic residues) spans 1465–1477 (PDEEEHLGLEEEE).

Belongs to the RNA polymerase beta' chain family. In terms of assembly, component of the RNA polymerase I (Pol I) complex consisting of 13 subunits: a ten-subunit catalytic core composed of POLR1A/RPA1, POLR1B/RPA2, POLR1C/RPAC1, POLR1D/RPAC2, POLR1H/RPA12, POLR2E/RPABC1, POLR2F/RPABC2, POLR2H/RPABC3, POLR2K/RPABC4 and POLR2L/RPABC5; a mobile stalk subunit POLR1F/RPA43 protruding from the core and additional subunits homologous to general transcription factors POLR1E/RPA49 and POLR1G/RPA34. Part of Pol I pre-initiation complex (PIC), in which Pol I core assembles with RRN3 and promoter-bound UTBF and SL1/TIF-IB complex. Interacts (via dock II domain) with TOP2A; this interaction may assist Pol I transcription initiation by releasing supercoils occurring during DNA unwinding. Interacts with CAVIN1; this interaction induces the dissociation of Pol I complex paused at rDNA terminator sequences. Interacts with MYO1C. Interacts with ERBB2. Interacts with DDX11. Interacts with RECQL5. It depends on Mg(2+) as a cofactor. Phosphorylated.

The protein localises to the nucleus. It is found in the nucleolus. The protein resides in the chromosome. The enzyme catalyses RNA(n) + a ribonucleoside 5'-triphosphate = RNA(n+1) + diphosphate. Functionally, catalytic core component of RNA polymerase I (Pol I), a DNA-dependent RNA polymerase which synthesizes ribosomal RNA precursors using the four ribonucleoside triphosphates as substrates. Transcribes 47S pre-rRNAs from multicopy rRNA gene clusters, giving rise to 5.8S, 18S and 28S ribosomal RNAs. Pol I-mediated transcription cycle proceeds through transcription initiation, transcription elongation and transcription termination stages. During transcription initiation, Pol I pre-initiation complex (PIC) is recruited by the selectivity factor 1 (SL1/TIF-IB) complex bound to the core promoter that precedes an rDNA repeat unit. The PIC assembly bends the promoter favoring the formation of the transcription bubble and promoter escape. Once the polymerase has escaped from the promoter it enters the elongation phase during which RNA is actively polymerized, based on complementarity with the template DNA strand. Highly processive, assembles in structures referred to as 'Miller trees' where many elongating Pol I complexes queue and transcribe the same rDNA coding regions. At terminator sequences downstream of the rDNA gene, PTRF interacts with Pol I and halts Pol I transcription leading to the release of the RNA transcript and polymerase from the DNA. Forms Pol I active center together with the second largest subunit POLR1B/RPA2. Appends one nucleotide at a time to the 3' end of the nascent RNA, with POLR1A/RPA1 contributing a Mg(2+)-coordinating DxDGD motif, and POLR1B/RPA2 participating in the coordination of a second Mg(2+) ion and providing lysine residues believed to facilitate Watson-Crick base pairing between the incoming nucleotide and the template base. Typically, Mg(2+) ions direct a 5' nucleoside triphosphate to form a phosphodiester bond with the 3' hydroxyl of the preceding nucleotide of the nascent RNA, with the elimination of pyrophosphate. Has proofreading activity: Pauses and backtracks to allow the cleavage of a missincorporated nucleotide via POLR1H/RPA12. High Pol I processivity is associated with decreased transcription fidelity. This Mus musculus (Mouse) protein is DNA-directed RNA polymerase I subunit RPA1.